The chain runs to 472 residues: Protein PIN-LIKES 1 (472 aa).

The Lumenal portion of the chain corresponds to 1–93 (MSLTQSAKLH…FYSMRMRLLD (93 aa)). The chain crosses the membrane as a helical span at residues 94–114 (LFITSSIPVAKILLITGIGFY). Over 115–133 (LALDQVNILNHDARKQLNN) the chain is Cytoplasmic. Residues 134–154 (IVFYVFSPSLVASSLSETITY) form a helical membrane-spanning segment. Topologically, residues 155 to 161 (ESMVKMW) are lumenal. A helical membrane pass occupies residues 162-182 (FMPLNVLLTFIIGSFLGWIVI). The Cytoplasmic portion of the chain corresponds to 183-193 (KITKPPSHLRG). A helical membrane pass occupies residues 194 to 214 (IIVGCCAAGNLGNMPLIIIPA). The Lumenal segment spans residues 215 to 231 (ICNEKGSPFGDPESCEK). A helical membrane pass occupies residues 232–252 (FGLGYIALSMAIGAIYIWTYV). Topologically, residues 253–309 (YNLMRMLANPAGETAINSTSSTMPLISPKVEVAEQVGTWGKVKQRVCSVAEKINLRT) are cytoplasmic. Residues 310–330 (IFAPSTIAALIALAVGLNPLL) form a helical membrane-spanning segment. Residues 331–347 (RKLLVGNTAPLRVIEDS) are Lumenal-facing. A helical transmembrane segment spans residues 348–368 (VSLLGDGAIPVLTLIVGGNLL). Residues 369–379 (NGLRGSGINKS) lie on the Cytoplasmic side of the membrane. Residues 380-400 (VIMGVVVVRYLLLPILGVFIV) form a helical membrane-spanning segment. The Lumenal portion of the chain corresponds to 401–413 (RGAHYLGLVTSEP). The helical transmembrane segment at 414–434 (LYQFVLLLQYVVPPAMNLGTI) threads the bilayer. The Cytoplasmic segment spans residues 435–446 (TQLFGSGESECS). The helical transmembrane segment at 447-467 (VILFWSYALASVSLTVWPTFF) threads the bilayer. Topologically, residues 468 to 472 (MWLVA) are lumenal.

This sequence belongs to the auxin efflux carrier (TC 2.A.69.2) family. Expressed in flowers.

The protein resides in the endoplasmic reticulum membrane. Functionally, involved in cellular auxin homeostasis by regulating auxin metabolism. Regulates intracellular auxin accumulation at the endoplasmic reticulum and thus auxin availability for nuclear auxin signaling. This is Protein PIN-LIKES 1 from Arabidopsis thaliana (Mouse-ear cress).